Here is an 87-residue protein sequence, read N- to C-terminus: Antitoxin epsilon (87 aa).

The protein belongs to the epsilon antitoxin family. In the presence of the zeta toxin, forms an inactive PezA(2)PezT(2) heterotetramer.

Antitoxin component of a type II toxin-antitoxin (TA) system. Neutralizes the toxic effect of cognate zeta toxin. Part of a postsegregational killing (PSK) system involved in the killing of plasmid-free cells. Continuous synthesis of the epsilon antitoxin is required to counteract the zeta toxin. In Lactococcus lactis subsp. lactis (Streptococcus lactis), this protein is Antitoxin epsilon.